The sequence spans 455 residues: Ammonium transporter Rh type B (455 aa).

The Cytoplasmic segment spans residues 1–13 (MAWSPRHSAGRRL). The chain crosses the membrane as a helical span at residues 14-34 (QLPLLCLLLQGATAILFAVFV). Residues 35 to 61 (RYNRETDAALWHWGNHSNADNEFYFRY) lie on the Extracellular side of the membrane. N49 carries N-linked (GlcNAc...) asparagine glycosylation. A helical membrane pass occupies residues 62–82 (PSFQDVHAMIFVGFGFLMVFL). The Cytoplasmic segment spans residues 83-86 (QRYG). Residues 87 to 107 (FGSVGFTFLLAAFALQWSTLI) form a helical membrane-spanning segment. The Extracellular segment spans residues 108–124 (QGFFHSFRGGYILVGME). The helical transmembrane segment at 125 to 145 (SMINADFCAGAVLISFGAVLG) threads the bilayer. The Cytoplasmic segment spans residues 146 to 151 (KTGPVQ). A helical membrane pass occupies residues 152–172 (LLLMALLEVVLFGLNEFVLLS). At 173-179 (LLEVKDA) the chain is on the extracellular side. The helical transmembrane segment at 180 to 200 (GGSMTIHTFGAYFGLILSRVL) threads the bilayer. Residues 201–219 (YRPQLEKSKHRQGSVYHSD) are Cytoplasmic-facing. Residues 220-240 (LFAMIGTIFLWIFWPSFNSAP) form a helical membrane-spanning segment. Residues 241-253 (TALGDGQHRTALN) lie on the Extracellular side of the membrane. The helical transmembrane segment at 254–274 (TYYSLTASTLSTFALSALVGG) threads the bilayer. Residues 275–277 (DGR) lie on the Cytoplasmic side of the membrane. The chain crosses the membrane as a helical span at residues 278 to 298 (LDMVHVQNAALAGGVVVGTSA). Position 299 (E299) is a topological domain, extracellular. Residues 300-320 (MMLTPFGALAAGFLAGAISTL) traverse the membrane as a helical segment. Residues 321-343 (GYKFVTPILESKLKVQDTCGVHN) lie on the Cytoplasmic side of the membrane. A helical membrane pass occupies residues 344–364 (LHGMPGVLGALLGGLVAGLAT). The Extracellular portion of the chain corresponds to 365-393 (REAYGDGLESVFPLIAEGQRSATSQAMHQ). A helical transmembrane segment spans residues 394–414 (LFGLFVTLTFASVGGGLGGLL). Residues 415–455 (LRLPILDSPPDSQCYEDQIYWEVPGEHEHLAQGSEETETQA) lie on the Cytoplasmic side of the membrane. The interaction with ANK3 stretch occupies residues 416 to 424 (RLPILDSPP). The Basolateral sorting signal motif lies at 429–432 (YEDQ).

It belongs to the ammonium transporter (TC 2.A.49) family. Rh subfamily. As to quaternary structure, interacts (via C-terminus) with ANK2 and ANK3; required for targeting to the basolateral membrane. Post-translationally, N-glycosylated.

The protein localises to the cell membrane. It localises to the basolateral cell membrane. It carries out the reaction NH4(+)(in) = NH4(+)(out). It catalyses the reaction methylamine(out) = methylamine(in). The catalysed reaction is CO2(out) = CO2(in). Ammonium transporter involved in the maintenance of acid-base homeostasis. Transports ammonium and its related derivative methylammonium across the basolateral plasma membrane of epithelial cells likely contributing to renal transepithelial ammonia transport and ammonia metabolism. May transport either NH4(+) or NH3 ammonia species predominantly mediating an electrogenic NH4(+) transport. May act as a CO2 channel providing for renal acid secretion. This is Ammonium transporter Rh type B (RHBG) from Bos taurus (Bovine).